The following is a 223-amino-acid chain: N-terminal Xaa-Pro-Lys N-methyltransferase 1 (223 aa).

The residue at position 1 (M1) is an N-acetylmethionine. An N-acetylthreonine; in N-terminal Xaa-Pro-Lys N-methyltransferase 1, N-terminally processed modification is found at T2. S-adenosyl-L-methionine-binding positions include G69, R74, 91 to 93 (DVT), 119 to 120 (LQ), and Q135.

The protein belongs to the methyltransferase superfamily. NTM1 family.

It localises to the nucleus. It catalyses the reaction N-terminal L-alanyl-L-prolyl-L-lysyl-[protein] + 3 S-adenosyl-L-methionine = N-terminal N,N,N-trimethyl-L-alanyl-L-prolyl-L-lysyl-[protein] + 3 S-adenosyl-L-homocysteine + 3 H(+). The enzyme catalyses N-terminal L-seryl-L-prolyl-L-lysyl-[protein] + 3 S-adenosyl-L-methionine = N-terminal N,N,N-trimethyl-L-seryl-L-prolyl-L-lysyl-[protein] + 3 S-adenosyl-L-homocysteine + 3 H(+). It carries out the reaction N-terminal L-prolyl-L-prolyl-L-lysyl-[protein] + 2 S-adenosyl-L-methionine = N-terminal N,N-dimethyl-L-prolyl-L-prolyl-L-lysyl-[protein] + 2 S-adenosyl-L-homocysteine + 2 H(+). Functionally, distributive alpha-N-methyltransferase that methylates the N-terminus of target proteins containing the N-terminal motif [Ala/Gly/Pro/Ser]-Pro-Lys when the initiator Met is cleaved. Specifically catalyzes mono-, di- or tri-methylation of the exposed alpha-amino group of the Ala, Gly or Ser residue in the [Ala/Gly/Ser]-Pro-Lys motif and mono- or di-methylation of Pro in the Pro-Pro-Lys motif. Some of the substrates may be primed by NTMT2-mediated monomethylation. Catalyzes the trimethylation of the N-terminal Gly in CENPA (after removal of Met-1). Responsible for the N-terminal methylation of KLHL31, MYL2, MYL3, RB1, RCC1, RPL23A and SET. Required during mitosis for normal bipolar spindle formation and chromosome segregation via its action on RCC1. This is N-terminal Xaa-Pro-Lys N-methyltransferase 1 (Ntmt1) from Mus musculus (Mouse).